The primary structure comprises 610 residues: Synaptotagmin-like protein 3 (610 aa).

Residues 4–123 (EIDLSALKEL…IKTGEWFYEE (120 aa)) form the RabBD domain. Positions 219–239 (RQCVGQTERRSQSDTAVNVTT) are disordered. C2 domains lie at 306–428 (VTGE…TQSF) and 462–603 (RPRK…NLWT).

In terms of assembly, monomer. Binds NRXN1. Binds RAB27A that has been activated by GTP-binding via its N-terminus.

The protein localises to the endomembrane system. Functionally, may act as Rab effector protein and play a role in vesicle trafficking. Binds phospholipids in the presence of calcium ions. The protein is Synaptotagmin-like protein 3 (SYTL3) of Homo sapiens (Human).